Consider the following 632-residue polypeptide: Chaperone protein DnaK (632 aa).

Residue T199 is modified to Phosphothreonine; by autocatalysis. Over residues 597–611 (AAQQAGQAEGQAAQE) the composition is skewed to low complexity. Positions 597–632 (AAQQAGQAEGQAAQEPSQSTGNAQAEATDAEYEEVK) are disordered. Positions 612–621 (PSQSTGNAQA) are enriched in polar residues.

It belongs to the heat shock protein 70 family.

Acts as a chaperone. This Amoebophilus asiaticus (strain 5a2) protein is Chaperone protein DnaK.